Reading from the N-terminus, the 146-residue chain is U1 small nuclear ribonucleoprotein C (146 aa).

The Matrin-type zinc finger occupies 4 to 36 (YYCDYCDTYLTHDSPSVRKTHCTGRKHRDNVKF). Positions 64-96 (NNPFAGGPSSAPPKPSGVSIPPPNMGAPPRPGM) are disordered. Residues 73–96 (SAPPKPSGVSIPPPNMGAPPRPGM) show a composition bias toward pro residues.

The protein belongs to the U1 small nuclear ribonucleoprotein C family. As to quaternary structure, U1 snRNP is composed of the 7 core Sm proteins B/B', D1, D2, D3, E, F and G that assemble in a heptameric protein ring on the Sm site of the small nuclear RNA to form the core snRNP, and at least 3 U1 snRNP-specific proteins U1-70K, U1-A and U1-C. U1-C interacts with U1 snRNA and the 5' splice-site region of the pre-mRNA.

Its subcellular location is the nucleus. Functionally, component of the spliceosomal U1 snRNP, which is essential for recognition of the pre-mRNA 5' splice-site and the subsequent assembly of the spliceosome. U1-C is directly involved in initial 5' splice-site recognition for both constitutive and regulated alternative splicing. The interaction with the 5' splice-site seems to precede base-pairing between the pre-mRNA and the U1 snRNA. Stimulates commitment or early (E) complex formation by stabilizing the base pairing of the 5' end of the U1 snRNA and the 5' splice-site region. The chain is U1 small nuclear ribonucleoprotein C from Drosophila pseudoobscura pseudoobscura (Fruit fly).